Consider the following 90-residue polypeptide: ATP synthase subunit e, mitochondrial (90 aa).

Residue Ser2 is modified to N-acetylserine. A helical membrane pass occupies residues 7-23 (VLRWSALGAGVVYGFVH).

F-type ATP synthases have 2 components, the catalytic core F(1) and the membrane-embedded component F(0), linked together by a central stalk and a peripheral stalk. The central stalk, also called rotor shaft, is often seen as part of F(1). The peripheral stalk is seen as part of F(0). F(0) contains the membrane channel next to the rotor. F-type ATP synthases form dimers but each monomer functions independently in ATP generation. The dimer consists of 17 different polypeptides: ATP1 (subunit alpha, 3 molecules per monomer, part of F(1)), ATP2 (subunit beta, 3 copies per monomer, part of F(1)), ATP3 (subunit gamma, part of the central stalk), ATP4 (subunit b, part of the peripheral stalk), ATP5/OSCP (subunit 5/OSCP, part of the peripheral stalk), ATP6 (subunit a, part of the peripheral stalk), ATP7 (subunit d, part of the peripheral stalk), ATP8 (subunit 8, part of the peripheral stalk), OLI1 (subunit c, part of the rotor, 10 molecules per monomer), ATP14 (subunit h, part of the peripheral stalk), ATP15 (subunit epsilon, part of the central stalk), ATP16 (subunit delta, part of the central stalk), ATP17 (subunit f, part of the peripheral stalk), ATP18 (subunit i/j, part of the peripheral stalk), ATP19 (subunit k, dimer-specific, at interface between monomers), ATP20 (subunit g, at interface between monomers), TIM11 (subunit e, at interface between monomers).

The protein resides in the mitochondrion inner membrane. Its function is as follows. Mitochondrial membrane ATP synthase (F(1)F(0) ATP synthase or Complex V) produces ATP from ADP in the presence of a proton gradient across the membrane which is generated by electron transport complexes of the respiratory chain. F-type ATP synthases consist of two structural domains, F(1) - containing the extramembraneous catalytic core, and F(0) - containing the membrane proton channel, linked together by a central stalk and a peripheral stalk. During catalysis, ATP synthesis in the catalytic domain of F(1) is coupled via a rotary mechanism of the central stalk subunits to proton translocation. Part of the complex F(0) domain. Minor subunit located with subunit a/ATP6 in the membrane. Together with subunit g/ATP20, probably contributes to membrane curvature at the site of the ATP synthase dimer, ultimately contributing to formation of cristae. In Yarrowia lipolytica (strain CLIB 122 / E 150) (Yeast), this protein is ATP synthase subunit e, mitochondrial.